The sequence spans 588 residues: Nuclear hormone receptor family member nhr-23 (588 aa).

The segment at 50 to 73 (LHAKSSLQPSLSIETPKSKENDES) is disordered. A compositionally biased stretch (polar residues) spans 52–64 (AKSSLQPSLSIET). Residues 160 to 235 (VIPCKVCGDK…LGMSRDAVKF (76 aa)) constitute a DNA-binding region (nuclear receptor). 2 NR C4-type zinc fingers span residues 163 to 183 (CKVC…CEGC) and 199 to 223 (CPRQ…LKKC). One can recognise an NR LBD domain in the interval 345 to 586 (PEEDVATRVI…ALYKELFTAD (242 aa)).

Belongs to the nuclear hormone receptor family. NR1 subfamily. In terms of tissue distribution, expressed in the germline and oocytes and is a maternal gene product. In males and sperm-producing hermaphrodites, expressed in early pachytene spermatocytes, increasing in level throughout late pachytene. Expression is undetectable in meiotically dividing spermatocytes or mature spermatids.

The protein localises to the nucleus. Its function is as follows. Orphan nuclear receptor. Transcription factor. Modulates expression of target genes, such as Period protein homolog lin-42 and microRNA let-7, by binding to hormone response elements (HRE). Involved in promoting oscillatory expression of the primary transcripts of let-7 and paralogous microRNAs miR-48, miR-84, and miR-241. Plays a role in normal development and required to regulate each larval molt. Involved in regulating both the frequency and number of molts, acting as part of a negative feedback loop with the let-7 family of microRNAs, perhaps contributing to a self-sustaining molecular-genetic oscillator. Positively modulates expression of collagen and hedgehog-related genes. Involved in development of the gonad and associated epidermal structures. Required in spermatogenesis, acting following the sperm/oocyte cell fate decision, downstream of the canonical sex-determination pathway. Involved in regulating formation of the sperm-specific fibrous body-membranous organelle (FB-MO) complexes, acting independently of transcription regulator spe-44. The protein is Nuclear hormone receptor family member nhr-23 of Caenorhabditis elegans.